A 1180-amino-acid polypeptide reads, in one-letter code: Pesticidal crystal protein Cry4Aa (1180 aa).

This sequence belongs to the delta endotoxin family.

In terms of biological role, promotes colloidosmotic lysis by binding to the midgut epithelial cells of insects. The protein is Pesticidal crystal protein Cry4Aa (cry4Aa) of Bacillus thuringiensis subsp. israelensis.